The primary structure comprises 609 residues: Wee1-like protein kinase (609 aa).

Positions 1 to 10 (MAFRQSEHEM) are enriched in basic and acidic residues. Disordered regions lie at residues 1-88 (MAFR…SMSP) and 147-166 (PLHN…PFTP). Ser23, Ser25, and Ser27 each carry phosphoserine. Residues 37 to 48 (RFADDDFDKDTP) are compositionally biased toward basic and acidic residues. At Thr47 the chain carries Phosphothreonine. Ser52 is modified (phosphoserine). The segment covering 153 to 165 (LPTQDTANVNPFT) has biased composition (polar residues). Residue Thr165 is modified to Phosphothreonine. Residue Ser168 is modified to Phosphoserine. Positions 239–517 (FMQVNVIGVG…SQSIFSHPIL (279 aa)) constitute a Protein kinase domain. Residues 245–253 (IGVGEFGVV) and Lys268 each bind ATP. The active-site Proton acceptor is Asp361. Mg(2+) contacts are provided by Asn366 and Asp412.

This sequence belongs to the protein kinase superfamily. Ser/Thr protein kinase family. WEE1 subfamily. Mg(2+) serves as cofactor. Post-translationally, phosphorylated during M and G1 phases. In terms of tissue distribution, expressed in embryos; expression remains high in the proliferating cells of the central nervous system well after cells in the rest of the embryo have ceased dividing.

The protein resides in the nucleus. The catalysed reaction is L-tyrosyl-[protein] + ATP = O-phospho-L-tyrosyl-[protein] + ADP + H(+). Negatively regulated by phosphorylation in the M-phase. Functionally, acts as a negative regulator of entry into mitosis (G2 to M transition). This kinase specifically phosphorylates and inactivates cyclin B1-complexed CDC2. This is Wee1-like protein kinase from Drosophila melanogaster (Fruit fly).